The chain runs to 411 residues: Imidazolonepropionase (411 aa).

Positions 78 and 80 each coordinate Fe(3+). The Zn(2+) site is built by H78 and H80. 3 residues coordinate 4-imidazolone-5-propanoate: R87, Y150, and H183. Y150 is a binding site for N-formimidoyl-L-glutamate. H248 lines the Fe(3+) pocket. H248 contributes to the Zn(2+) binding site. Q251 lines the 4-imidazolone-5-propanoate pocket. D322 serves as a coordination point for Fe(3+). D322 is a binding site for Zn(2+). N-formimidoyl-L-glutamate-binding residues include N324 and G326. A 4-imidazolone-5-propanoate-binding site is contributed by T327.

This sequence belongs to the metallo-dependent hydrolases superfamily. HutI family. It depends on Zn(2+) as a cofactor. The cofactor is Fe(3+).

It localises to the cytoplasm. It catalyses the reaction 4-imidazolone-5-propanoate + H2O = N-formimidoyl-L-glutamate. It functions in the pathway amino-acid degradation; L-histidine degradation into L-glutamate; N-formimidoyl-L-glutamate from L-histidine: step 3/3. Functionally, catalyzes the hydrolytic cleavage of the carbon-nitrogen bond in imidazolone-5-propanoate to yield N-formimidoyl-L-glutamate. It is the third step in the universal histidine degradation pathway. This Flavobacterium psychrophilum (strain ATCC 49511 / DSM 21280 / CIP 103535 / JIP02/86) protein is Imidazolonepropionase.